Consider the following 132-residue polypeptide: Small ribosomal subunit protein uS8 (132 aa).

This sequence belongs to the universal ribosomal protein uS8 family. As to quaternary structure, part of the 30S ribosomal subunit. Contacts proteins S5 and S12.

Its function is as follows. One of the primary rRNA binding proteins, it binds directly to 16S rRNA central domain where it helps coordinate assembly of the platform of the 30S subunit. The polypeptide is Small ribosomal subunit protein uS8 (Bifidobacterium longum (strain NCC 2705)).